A 296-amino-acid polypeptide reads, in one-letter code: Protoheme IX farnesyltransferase (296 aa).

At 1–9 (MMFKQYLQV) the chain is on the cytoplasmic side. Residues 10–28 (TKPGIIFGNLISVIGGFLL) traverse the membrane as a helical segment. At 29–37 (ASKGSIDYP) the chain is on the periplasmic side. The chain crosses the membrane as a helical span at residues 38–56 (LFIYTLVGVSLVVASGCVF). The Cytoplasmic segment spans residues 57–78 (NNYIDRDIDRKMERTKNRVLVK). Residues 79–97 (GLISPAVSLVYATLLGIAG) form a helical membrane-spanning segment. The Periplasmic segment spans residues 98–107 (FMLLWFGANP). The chain crosses the membrane as a helical span at residues 108-126 (LACWLGVMGFVVYVGVYSL). Residues 127–197 (YMKRHSVYGT…YQAANIPVLP (71 aa)) lie on the Cytoplasmic side of the membrane. The chain crosses the membrane as a helical span at residues 198 to 216 (VVKGISVAKNHITLYIIAF). The Periplasmic segment spans residues 217–228 (AVATLMLSLGGY). The chain crosses the membrane as a helical span at residues 229-247 (AGYKYLVVAAAVSVWWLGM). The Cytoplasmic segment spans residues 248-268 (ALRGYKVADDRIWARKLFGFS). The chain crosses the membrane as a helical span at residues 269-287 (IIAITALSVMMSVDFMVPD). The Periplasmic portion of the chain corresponds to 288 to 296 (SHTLLAAVW).

The protein belongs to the UbiA prenyltransferase family. Protoheme IX farnesyltransferase subfamily.

The protein localises to the cell inner membrane. It carries out the reaction heme b + (2E,6E)-farnesyl diphosphate + H2O = Fe(II)-heme o + diphosphate. It functions in the pathway porphyrin-containing compound metabolism; heme O biosynthesis; heme O from protoheme: step 1/1. Converts heme B (protoheme IX) to heme O by substitution of the vinyl group on carbon 2 of heme B porphyrin ring with a hydroxyethyl farnesyl side group. The polypeptide is Protoheme IX farnesyltransferase (Shigella flexneri).